The following is a 576-amino-acid chain: Cyclic nucleotide-binding domain-containing protein 2 (576 aa).

116–239 lines the a nucleoside 3',5'-cyclic phosphate pocket; it reads SYRNYAEPLQ…DAQYRFEFFR (124 aa).

Its subcellular location is the cytoplasm. The protein resides in the cytosol. Essential for male fertility. Plays an important role in spermatogenesis and regulates sperm motility by controlling the development of the flagellar bending of sperm. This Homo sapiens (Human) protein is Cyclic nucleotide-binding domain-containing protein 2 (CNBD2).